The primary structure comprises 965 residues: Transmembrane channel-like protein 5 (965 aa).

2 stretches are compositionally biased toward polar residues: residues 1-10 (MSSFHKNSSY) and 20-31 (SGSQNHTQNYLR). A disordered region spans residues 1–235 (MSSFHKNSSY…GAEEGDVYSP (235 aa)). Residues 1–417 (MSSFHKNSSY…YFSFLRWLLK (417 aa)) are Extracellular-facing. The span at 61–70 (TNPDYHHSLA) shows a compositional bias: basic and acidic residues. A compositionally biased stretch (polar residues) spans 166-181 (QGNSYHSGPRSHSNLP). Ser248 is subject to Phosphoserine. Residues 418 to 438 (FNIFSFVMNFSFIIIPQFTVG) traverse the membrane as a helical segment. The Cytoplasmic portion of the chain corresponds to 439–444 (EKNTLQ). Residues 445 to 467 (FTGLEFFTGAGYFRETVMYYGFY) form a helical membrane-spanning segment. The Extracellular segment spans residues 468–484 (TNSTIRHRMGGASYNMQ). A helical transmembrane segment spans residues 485–505 (LAYIFTIGACLVICFFSLLFS). The Cytoplasmic portion of the chain corresponds to 506–578 (MAKYFRNNFI…NQKLTRFSVH (73 aa)). The chain crosses the membrane as a helical span at residues 579-599 (VAAWLVSTGITAACCVAVYYL). Residues 600–613 (AEYNSEFLKTHKNP) are Extracellular-facing. Residues 614 to 634 (GAVLLLPFVVSCINLAVPRFY) form a helical membrane-spanning segment. Residues 635–657 (SMFRLVERYEIPRQEVYVLLIRN) are Cytoplasmic-facing. Residues 658 to 678 (IFLKISIVGILCYYWLNIVAL) traverse the membrane as a helical segment. Residues 679-691 (SGEECWETLIGQD) are Extracellular-facing. A helical membrane pass occupies residues 692–712 (IYRLLLMDFVFSLADSLLGEF). At 713–747 (LRRLIGMKFITSLSLQEFDIARNVLELIYAQTLAW) the chain is on the cytoplasmic side. Residues 748–768 (LGIFFCPLLPFIQMITLFIMF) traverse the membrane as a helical segment. At 769–794 (YVKNVSLMMNFQPPSKAWRASQMITF) the chain is on the extracellular side. Residues 795–815 (FIFLLFFPSFTGVLCTLAITI) form a helical membrane-spanning segment. At 816 to 859 (WRLKPSADCGPFRGLPSFIQSIYSWIDTLSHRPGYLWVVWIYQN) the chain is on the cytoplasmic side. Residues 860 to 880 (LIGSVHFFFILTLIVLIITYL) form a helical membrane-spanning segment. The Extracellular portion of the chain corresponds to 881 to 965 (YWQITEGRKV…RSMQEENAIA (85 aa)).

This sequence belongs to the TMC family.

The protein resides in the membrane. Functionally, probable component of an ion channel. Molecular function hasn't been characterized yet. This Rattus norvegicus (Rat) protein is Transmembrane channel-like protein 5.